The following is a 1005-amino-acid chain: Protein TIC 214 (1005 aa).

6 consecutive transmembrane segments (helical) span residues 25–45, 67–87, 91–111, 131–151, 177–197, and 304–324; these read VGLYYGFISAFSIGSSYLFLL, FFTGQLLIFISILYGPLHLAL, HTILLLLAPYFFFHFLSSNSG, SFQLVFLHSLLFQLFSLSVLG, FVGWLIGHILVLKWAGLVFVW, and LFSIILFAFFLLYLDRTPLLY. 2 disordered regions span residues 457 to 481 and 767 to 833; these read VEEGVQEKQEGFPEEPISPSEEREE and KKKK…KRKQ. Residues 783 to 810 are compositionally biased toward basic residues; the sequence is KQKKVKSKQKKVKSKQKKVKSKQKKVKS. Residues 811-824 are compositionally biased toward basic and acidic residues; the sequence is KQNEIKSKQNEIKS.

It belongs to the TIC214 family. As to quaternary structure, part of the Tic complex.

The protein localises to the plastid. It localises to the chloroplast inner membrane. Its function is as follows. Involved in protein precursor import into chloroplasts. May be part of an intermediate translocation complex acting as a protein-conducting channel at the inner envelope. In Oenothera berteroana (Bertero's evening primrose), this protein is Protein TIC 214.